A 188-amino-acid chain; its full sequence is Translation machinery-associated protein 22 (188 aa).

In terms of domain architecture, SUI1 spans 96-167; it reads VVIKRIERSK…GVEELITQML (72 aa).

This sequence belongs to the DENR family. As to quaternary structure, interacts with the 40S ribosomal subunit.

Its subcellular location is the cytoplasm. The sequence is that of Translation machinery-associated protein 22 (TMA22) from Yarrowia lipolytica (strain CLIB 122 / E 150) (Yeast).